Here is a 517-residue protein sequence, read N- to C-terminus: MIPDISEALSWLEKHPLAVKGIQRGIERETLRVTANGDLATTGHPEILGSALAHPWITTDFAEALLEFITPVDKDVDHLLTFLRDIHRHVSRNLGDERMWPLSMPCFIDSEQNIELAQYGSSNVGRFKTLYREGLKNRYGALMQTISGVHYNFSLPLSFWQAREGVADAESGKKAISAGYFRLIRNYYRFGWVIPYLFGASPAICSSFLRGRETALPFEHTEKGMLYLPYATSLRLSDLGYTNKSQSNLGITFNDLDTYVAALKRAIKTPSEEYAQVGVKKEGRYLQLNTNVLQIENELYAPIRPKRVTRAGETPSDALLRGGIEYIEVRSLDINPFSPTGVSESQVRFLDLFLIWCALADAPEMSADELLCTRKNWNRVILEGRKPGQTVGMRCETIQQPIAEVGKSLFADLRRVAEVLDAENDQPHYQQVCDELLVGFDDPETTFSGRLLTLMKQEGNGSVGLNLAEEYRQMLSGEPLQVLTEEQLVAEGERSWQRQRQIESEDTMGFDDYLATQ.

This sequence belongs to the glutamate--cysteine ligase type 1 family. Type 1 subfamily.

It catalyses the reaction L-cysteine + L-glutamate + ATP = gamma-L-glutamyl-L-cysteine + ADP + phosphate + H(+). It participates in sulfur metabolism; glutathione biosynthesis; glutathione from L-cysteine and L-glutamate: step 1/2. This chain is Glutamate--cysteine ligase, found in Pectobacterium atrosepticum (strain SCRI 1043 / ATCC BAA-672) (Erwinia carotovora subsp. atroseptica).